Here is a 119-residue protein sequence, read N- to C-terminus: NADH-quinone oxidoreductase subunit A (119 aa).

Transmembrane regions (helical) follow at residues 9-29 (VLLF…LGYV), 63-83 (LVAI…PWAV), and 88-108 (VGMT…VGFA).

Belongs to the complex I subunit 3 family. NDH-1 is composed of 14 different subunits. Subunits NuoA, H, J, K, L, M, N constitute the membrane sector of the complex.

The protein resides in the cell inner membrane. The catalysed reaction is a quinone + NADH + 5 H(+)(in) = a quinol + NAD(+) + 4 H(+)(out). Functionally, NDH-1 shuttles electrons from NADH, via FMN and iron-sulfur (Fe-S) centers, to quinones in the respiratory chain. The immediate electron acceptor for the enzyme in this species is believed to be ubiquinone. Couples the redox reaction to proton translocation (for every two electrons transferred, four hydrogen ions are translocated across the cytoplasmic membrane), and thus conserves the redox energy in a proton gradient. In Paracidovorax citrulli (strain AAC00-1) (Acidovorax citrulli), this protein is NADH-quinone oxidoreductase subunit A.